The following is a 477-amino-acid chain: Lactate utilization protein B (477 aa).

4Fe-4S ferredoxin-type domains are found at residues 304-334 (GTEFQSVLQCIRCAACINVCPVYRHVGGHSY) and 353-382 (YDDYKELPYASSLCAACSEACPVKIPLHEL). 7 residues coordinate [4Fe-4S] cluster: Cys-313, Cys-316, Cys-319, Cys-323, Cys-366, Cys-369, and Cys-373. The segment at 433–477 (KEDGKITKGPGPLKQWTQIRDFPAPNKSRFRDWFEDRRKEKGEDK) is disordered. Residues 461 to 477 (RFRDWFEDRRKEKGEDK) show a composition bias toward basic and acidic residues.

This sequence belongs to the LutB/YkgF family.

Functionally, is involved in L-lactate degradation and allows cells to grow with lactate as the sole carbon source. Has probably a role as an electron transporter during oxidation of L-lactate. The protein is Lactate utilization protein B of Bacillus licheniformis (strain ATCC 14580 / DSM 13 / JCM 2505 / CCUG 7422 / NBRC 12200 / NCIMB 9375 / NCTC 10341 / NRRL NRS-1264 / Gibson 46).